The following is a 434-amino-acid chain: Chaperone SurA (434 aa).

The first 22 residues, 1–22 (MKHSKKIIFALLALAMSNTSMA), serve as a signal peptide directing secretion. 2 PpiC domains span residues 173–274 (DVEF…KVVD) and 283–383 (VEEV…QLES).

It is found in the periplasm. It carries out the reaction [protein]-peptidylproline (omega=180) = [protein]-peptidylproline (omega=0). Chaperone involved in the correct folding and assembly of outer membrane proteins. Recognizes specific patterns of aromatic residues and the orientation of their side chains, which are found more frequently in integral outer membrane proteins. May act in both early periplasmic and late outer membrane-associated steps of protein maturation. This is Chaperone SurA from Shewanella frigidimarina (strain NCIMB 400).